Consider the following 172-residue polypeptide: Peptide deformylase (172 aa).

Fe cation-binding residues include Cys-92 and His-134. The active site involves Glu-135. Residue His-138 participates in Fe cation binding.

Belongs to the polypeptide deformylase family. The cofactor is Fe(2+).

The enzyme catalyses N-terminal N-formyl-L-methionyl-[peptide] + H2O = N-terminal L-methionyl-[peptide] + formate. Removes the formyl group from the N-terminal Met of newly synthesized proteins. Requires at least a dipeptide for an efficient rate of reaction. N-terminal L-methionine is a prerequisite for activity but the enzyme has broad specificity at other positions. The sequence is that of Peptide deformylase from Saccharophagus degradans (strain 2-40 / ATCC 43961 / DSM 17024).